The sequence spans 208 residues: Urease accessory protein UreG 1 (208 aa).

GTP is bound at residue 14–21 (GPVGSGKT).

The protein belongs to the SIMIBI class G3E GTPase family. UreG subfamily. In terms of assembly, homodimer. UreD, UreF and UreG form a complex that acts as a GTP-hydrolysis-dependent molecular chaperone, activating the urease apoprotein by helping to assemble the nickel containing metallocenter of UreC. The UreE protein probably delivers the nickel.

It is found in the cytoplasm. Facilitates the functional incorporation of the urease nickel metallocenter. This process requires GTP hydrolysis, probably effectuated by UreG. Functionally, disruption of the ure1 gene cluster suggests that it protects brucellae during their passage through the stomach. The major route of infection in human brucellosis is oral. The protein is Urease accessory protein UreG 1 of Brucella abortus (strain 2308).